The chain runs to 310 residues: tRNA dimethylallyltransferase (310 aa).

An ATP-binding site is contributed by 5–12 (GPTASGKS). Position 7-12 (7-12 (TASGKS)) interacts with substrate. Positions 30–33 (DSMQ) are interaction with substrate tRNA.

The protein belongs to the IPP transferase family. Monomer. The cofactor is Mg(2+).

The catalysed reaction is adenosine(37) in tRNA + dimethylallyl diphosphate = N(6)-dimethylallyladenosine(37) in tRNA + diphosphate. Catalyzes the transfer of a dimethylallyl group onto the adenine at position 37 in tRNAs that read codons beginning with uridine, leading to the formation of N6-(dimethylallyl)adenosine (i(6)A). This is tRNA dimethylallyltransferase from Rhodopseudomonas palustris (strain HaA2).